The primary structure comprises 701 residues: Elongation factor G (701 aa).

The region spanning 8-290 (SLYRNIGISA…AVVELLPAPT (283 aa)) is the tr-type G domain. GTP contacts are provided by residues 17–24 (AHIDAGKT), 88–92 (DTPGH), and 142–145 (NKMD).

Belongs to the TRAFAC class translation factor GTPase superfamily. Classic translation factor GTPase family. EF-G/EF-2 subfamily.

Its subcellular location is the cytoplasm. Functionally, catalyzes the GTP-dependent ribosomal translocation step during translation elongation. During this step, the ribosome changes from the pre-translocational (PRE) to the post-translocational (POST) state as the newly formed A-site-bound peptidyl-tRNA and P-site-bound deacylated tRNA move to the P and E sites, respectively. Catalyzes the coordinated movement of the two tRNA molecules, the mRNA and conformational changes in the ribosome. The protein is Elongation factor G of Neisseria meningitidis serogroup C (strain 053442).